The primary structure comprises 881 residues: DNA mismatch repair protein MutS (881 aa).

632 to 639 (GPNMGGKS) lines the ATP pocket.

Belongs to the DNA mismatch repair MutS family.

In terms of biological role, this protein is involved in the repair of mismatches in DNA. It is possible that it carries out the mismatch recognition step. This protein has a weak ATPase activity. The protein is DNA mismatch repair protein MutS of Acinetobacter baylyi (strain ATCC 33305 / BD413 / ADP1).